A 1255-amino-acid polypeptide reads, in one-letter code: Period circadian protein homolog 2 (1255 aa).

The interval 1–79 (MNGYAEFPPS…EPPDARQSPD (79 aa)) is disordered. Residues 35 to 56 (SSGSSGHETNENCSTGRDSQGS) show a composition bias toward polar residues. The short motif at 111 to 120 (LIKTLKELKV) is the Nuclear export signal 1 element. A PAS 1 domain is found at 181–248 (VTSEHIVKNA…FHSFTSPYKL (68 aa)). The LXXLL signature appears at 308–312 (LCCLL). Residues 321–387 (YEAPRIPPEK…MLAIHKKILQ (67 aa)) enclose the PAS 2 domain. Positions 395–438 (YSPIRFRARNGEYITLDTSWSSFINPWSRKISFIIGRHKVRVGP) constitute a PAC domain. Residues 462 to 471 (LTEQIHRLLL) carry the Nuclear export signal 2 motif. 2 disordered regions span residues 473–557 (PVPH…AVPA) and 617–646 (RSSDKRKATVSPGPHAGEAEPPSRVNSRTG). The important for protein stability stretch occupies residues 480-484 (SGYGS). The span at 504–516 (NGHEDSRRRRAEI) shows a compositional bias: basic and acidic residues. The segment at 512–717 (RRAEICKNGN…ALACGLSQEK (206 aa)) is CSNK1E binding domain. Residues S527, S530, S533, and S540 each carry the phosphoserine modification. The span at 529 to 541 (YSHESGEQKKKSV) shows a compositional bias: basic and acidic residues. S662, S696, S700, S714, S766, and S771 each carry phosphoserine. Disordered stretches follow at residues 764-838 (ERSK…DTSQ) and 931-985 (FPSH…QSRS). The Nuclear localization signal motif lies at 789 to 805 (KKTGKNRKLKSKRVKPR). A compositionally biased stretch (basic residues) spans 790 to 803 (KTGKNRKLKSKRVK). Composition is skewed to polar residues over residues 829 to 838 (TAWSPSDTSQ) and 936 to 956 (TLTSEMASASQPEFPSRTSIP). Residues 888-1071 (QFAVQPPPFP…NEDLCSASGS (184 aa)) form an interaction with PPARG region. S945 is subject to Phosphoserine. Residues 959-972 (PCACPATRATPPSA) are compositionally biased toward low complexity. S977 carries the post-translational modification Phosphoserine. Positions 989-996 (LQLNLLQL) match the Nuclear export signal 3 motif. Residues 1018–1050 (VGADCKPGTSRDQQPKAPLTRDEPSDTQNSDAL) are disordered. Residues 1057–1061 (LNLLL) carry the LXXLL motif. The disordered stretch occupies residues 1077 to 1106 (LGSGSLGCDASPSGAGSSDTSHTSKYFGSI). Positions 1090–1106 (GAGSSDTSHTSKYFGSI) are enriched in polar residues. S1124 is subject to Phosphoserine. The interval 1155–1255 (SRNLEAVLKE…PLNHRIEEQT (101 aa)) is CRY binding domain. The disordered stretch occupies residues 1231–1255 (GLSEVSDTKEDENGSPLNHRIEEQT).

In terms of assembly, homodimer. Component of the circadian core oscillator, which includes the CRY proteins, CLOCK or NPAS2, BMAL1 or BMAL2, CSNK1D and/or CSNK1E, TIMELESS, and the PER proteins. Interacts with CLOCK-BMAL1 (off DNA). Interacts with BMAL2. Interacts directly with PER1 and PER3, and through a C-terminal domain, with CRY1 and CRY2. Interacts (via PAS 2 domain) with TIMELESS. Interacts with NFIL3. Different large complexes have been identified with different repressive functions. The core of PER complexes is composed of at least PER1, PER2, PER3, CRY1, CRY2, CSNK1D and/or CSNK1E. The large PER complex involved in the repression of transcriptional termination is composed of at least PER2, CDK9, DDX5, DHX9, NCBP1 and POLR2A (active). The large PER complex involved in the histone deacetylation is composed of at least HDAC1, PER2, SFPQ and SIN3A. The large PER complex involved in the histone methylation is composed of at least PER2, CBX3, TRIM28, SUV39H1 and/or SUV39H2; CBX3 mediates the formation of the complex. Interacts with SETX; the interaction inhibits termination of circadian target genes. Interacts with the nuclear receptors HNF4A, NR1D1, NR4A2, RORA, PPARA, PPARG and THRA; the interaction with at least PPARG is ligand dependent. Interacts with PML. Interacts (phosphorylated) with BTRC and FBXW11; the interactions trigger proteasomal degradation. Interacts with NONO and SFPQ. Interacts with CAVIN3. Interacts with MAGEL2. Interacts with MAP1LC3B. Interacts with HNF4A. Acetylated. Deacetylated by SIRT1, resulting in decreased protein stability. Deacetylated by SIRT6, preventing its degradation by the proteasome, resulting in increased protein stability. In terms of processing, phosphorylated by CSNK1E and CSNK1D. Phosphorylation results in PER2 protein degradation. May be dephosphorylated by PP1. Post-translationally, ubiquitinated, leading to its proteasomal degradation. Ubiquitination may be inhibited by CRY1. Widely expressed. Found in heart, brain, placenta, lung, liver, skeleatal muscle, kidney and pancreas. High levels in skeletal muscle and pancreas. Low levels in lung. Isoform 2 is expressed in keratinocytes (at protein level).

The protein resides in the nucleus. It localises to the cytoplasm. The protein localises to the perinuclear region. Its subcellular location is the nucleolus. Transcriptional repressor which forms a core component of the circadian clock. The circadian clock, an internal time-keeping system, regulates various physiological processes through the generation of approximately 24 hour circadian rhythms in gene expression, which are translated into rhythms in metabolism and behavior. It is derived from the Latin roots 'circa' (about) and 'diem' (day) and acts as an important regulator of a wide array of physiological functions including metabolism, sleep, body temperature, blood pressure, endocrine, immune, cardiovascular, and renal function. Consists of two major components: the central clock, residing in the suprachiasmatic nucleus (SCN) of the brain, and the peripheral clocks that are present in nearly every tissue and organ system. Both the central and peripheral clocks can be reset by environmental cues, also known as Zeitgebers (German for 'timegivers'). The predominant Zeitgeber for the central clock is light, which is sensed by retina and signals directly to the SCN. The central clock entrains the peripheral clocks through neuronal and hormonal signals, body temperature and feeding-related cues, aligning all clocks with the external light/dark cycle. Circadian rhythms allow an organism to achieve temporal homeostasis with its environment at the molecular level by regulating gene expression to create a peak of protein expression once every 24 hours to control when a particular physiological process is most active with respect to the solar day. Transcription and translation of core clock components (CLOCK, NPAS2, BMAL1, BMAL2, PER1, PER2, PER3, CRY1 and CRY2) plays a critical role in rhythm generation, whereas delays imposed by post-translational modifications (PTMs) are important for determining the period (tau) of the rhythms (tau refers to the period of a rhythm and is the length, in time, of one complete cycle). A diurnal rhythm is synchronized with the day/night cycle, while the ultradian and infradian rhythms have a period shorter and longer than 24 hours, respectively. Disruptions in the circadian rhythms contribute to the pathology of cardiovascular diseases, cancer, metabolic syndrome and aging. A transcription/translation feedback loop (TTFL) forms the core of the molecular circadian clock mechanism. Transcription factors, CLOCK or NPAS2 and BMAL1 or BMAL2, form the positive limb of the feedback loop, act in the form of a heterodimer and activate the transcription of core clock genes and clock-controlled genes (involved in key metabolic processes), harboring E-box elements (5'-CACGTG-3') within their promoters. The core clock genes: PER1/2/3 and CRY1/2 which are transcriptional repressors form the negative limb of the feedback loop and interact with the CLOCK|NPAS2-BMAL1|BMAL2 heterodimer inhibiting its activity and thereby negatively regulating their own expression. This heterodimer also activates nuclear receptors NR1D1/2 and RORA/B/G, which form a second feedback loop and which activate and repress BMAL1 transcription, respectively. PER1 and PER2 proteins transport CRY1 and CRY2 into the nucleus with appropriate circadian timing, but also contribute directly to repression of clock-controlled target genes through interaction with several classes of RNA-binding proteins, helicases and others transcriptional repressors. PER appears to regulate circadian control of transcription by at least three different modes. First, interacts directly with the CLOCK-BMAL1 at the tail end of the nascent transcript peak to recruit complexes containing the SIN3-HDAC that remodel chromatin to repress transcription. Second, brings H3K9 methyltransferases such as SUV39H1 and SUV39H2 to the E-box elements of the circadian target genes, like PER2 itself or PER1. The recruitment of each repressive modifier to the DNA seems to be very precisely temporally orchestrated by the large PER complex, the deacetylases acting before than the methyltransferases. Additionally, large PER complexes are also recruited to the target genes 3' termination site through interactions with RNA-binding proteins and helicases that may play a role in transcription termination to regulate transcription independently of CLOCK-BMAL1 interactions. Recruitment of large PER complexes to the elongating polymerase at PER and CRY termination sites inhibited SETX action, impeding RNA polymerase II release and thereby repressing transcriptional reinitiation. May propagate clock information to metabolic pathways via the interaction with nuclear receptors. Coactivator of PPARA and corepressor of NR1D1, binds rhythmically at the promoter of nuclear receptors target genes like BMAL1 or G6PC1. Directly and specifically represses PPARG proadipogenic activity by blocking PPARG recruitment to target promoters and thereby inhibiting transcriptional activation. Required for fatty acid and lipid metabolism, is involved as well in the regulation of circulating insulin levels. Plays an important role in the maintenance of cardiovascular functions through the regulation of NO and vasodilatatory prostaglandins production in aortas. Controls circadian glutamate uptake in synaptic vesicles through the regulation of VGLUT1 expression. May also be involved in the regulation of inflammatory processes. Represses the CLOCK-BMAL1 induced transcription of BHLHE40/DEC1 and ATF4. Negatively regulates the formation of the TIMELESS-CRY1 complex by competing with TIMELESS for binding to CRY1. The sequence is that of Period circadian protein homolog 2 (PER2) from Homo sapiens (Human).